The primary structure comprises 418 residues: Ankyrin repeat and SOCS box protein 6 (418 aa).

ANK repeat units lie at residues Glu-65–Phe-95, Thr-100–Arg-129, His-134–Ala-164, Asn-168–Ala-203, Cys-224–Glu-253, and Glu-258–Cys-287. The SOCS box domain occupies Ala-358–Asp-413.

This sequence belongs to the ankyrin SOCS box (ASB) family. In terms of assembly, binds APS. Identified in a complex with ELOB and ELOC. Interacts with CUL5 and RNF7. Interacts with SQSTM1. As to expression, detected in adipocytes.

Its subcellular location is the cytoplasm. It participates in protein modification; protein ubiquitination. Its function is as follows. Probable substrate-recognition component of a SCF-like ECS (Elongin-Cullin-SOCS-box protein) E3 ubiquitin-protein ligase complex which mediates the ubiquitination and subsequent proteasomal degradation of target proteins. May play a role in the regulation of cell proliferation and autophagy by promoting the ubiquitination and degradation of SQSTM1. This chain is Ankyrin repeat and SOCS box protein 6 (Asb6), found in Mus musculus (Mouse).